The following is a 219-amino-acid chain: Deoxyribose-phosphate aldolase 1 (219 aa).

Catalysis depends on Asp87, which acts as the Proton donor/acceptor. Lys149 acts as the Schiff-base intermediate with acetaldehyde in catalysis. The active-site Proton donor/acceptor is Lys178.

It belongs to the DeoC/FbaB aldolase family. DeoC type 1 subfamily.

The protein resides in the cytoplasm. It carries out the reaction 2-deoxy-D-ribose 5-phosphate = D-glyceraldehyde 3-phosphate + acetaldehyde. The protein operates within carbohydrate degradation; 2-deoxy-D-ribose 1-phosphate degradation; D-glyceraldehyde 3-phosphate and acetaldehyde from 2-deoxy-alpha-D-ribose 1-phosphate: step 2/2. Functionally, catalyzes a reversible aldol reaction between acetaldehyde and D-glyceraldehyde 3-phosphate to generate 2-deoxy-D-ribose 5-phosphate. This is Deoxyribose-phosphate aldolase 1 from Vibrio vulnificus (strain YJ016).